The chain runs to 190 residues: Small ribosomal subunit protein uS4 (190 aa).

One can recognise an S4 RNA-binding domain in the interval 106 to 178 (RRLQTVVFKH…GRVKRVKRNA (73 aa)). The segment at 166–190 (GRPGRVKRVKRNAAKKGSGGGDDDE) is disordered. The span at 169-179 (GRVKRVKRNAA) shows a compositional bias: basic residues.

The protein belongs to the universal ribosomal protein uS4 family.

The chain is Small ribosomal subunit protein uS4 from Trypanosoma brucei brucei.